The chain runs to 563 residues: Arginine--tRNA ligase (563 aa).

The 'HIGH' region motif lies at 122–132 (PNIAKPISMGH).

Belongs to the class-I aminoacyl-tRNA synthetase family. Monomer.

Its subcellular location is the cytoplasm. It catalyses the reaction tRNA(Arg) + L-arginine + ATP = L-arginyl-tRNA(Arg) + AMP + diphosphate. This Latilactobacillus sakei subsp. sakei (strain 23K) (Lactobacillus sakei subsp. sakei) protein is Arginine--tRNA ligase.